The primary structure comprises 366 residues: ERCC4 domain-containing protein EP364R (366 aa).

The 99-residue stretch at 3–101 (FLVADHREHH…QLYFFVEGPA (99 aa)) folds into the ERCC4 domain.

Belongs to the asfivirus EP364R family.

In terms of biological role, plays a role in the inhibition of type I interferon signaling pathway. Mechanistically, specifically interacts with 2',3'-cGAMP and cleaves it via its phosphodiesterase activity. In turn, prevents 2',3'-cGAMP interaction with host ER-resident STING1 leading to inhibition of downstream signaling pathway and type I interferon production. This African swine fever virus (isolate Pig/Kenya/KEN-50/1950) (ASFV) protein is ERCC4 domain-containing protein EP364R.